The sequence spans 178 residues: Translation initiation factor IF-3 (178 aa).

The interval 1–20 (MRRPFRATPVQKDGPRSNRD) is disordered.

This sequence belongs to the IF-3 family. As to quaternary structure, monomer.

It localises to the cytoplasm. Its function is as follows. IF-3 binds to the 30S ribosomal subunit and shifts the equilibrium between 70S ribosomes and their 50S and 30S subunits in favor of the free subunits, thus enhancing the availability of 30S subunits on which protein synthesis initiation begins. The chain is Translation initiation factor IF-3 from Brucella anthropi (strain ATCC 49188 / DSM 6882 / CCUG 24695 / JCM 21032 / LMG 3331 / NBRC 15819 / NCTC 12168 / Alc 37) (Ochrobactrum anthropi).